Here is a 255-residue protein sequence, read N- to C-terminus: Pyridoxine 5'-phosphate synthase (255 aa).

3-amino-2-oxopropyl phosphate-binding residues include asparagine 8 and arginine 19. The active-site Proton acceptor is the histidine 44. 2 residues coordinate 1-deoxy-D-xylulose 5-phosphate: arginine 46 and histidine 51. Residue glutamate 74 is the Proton acceptor of the active site. Threonine 111 is a binding site for 1-deoxy-D-xylulose 5-phosphate. Residue histidine 202 is the Proton donor of the active site. Residues aspartate 203 and 225–226 (GH) contribute to the 3-amino-2-oxopropyl phosphate site.

It belongs to the PNP synthase family. Homooctamer; tetramer of dimers.

It localises to the cytoplasm. The catalysed reaction is 3-amino-2-oxopropyl phosphate + 1-deoxy-D-xylulose 5-phosphate = pyridoxine 5'-phosphate + phosphate + 2 H2O + H(+). It participates in cofactor biosynthesis; pyridoxine 5'-phosphate biosynthesis; pyridoxine 5'-phosphate from D-erythrose 4-phosphate: step 5/5. Its function is as follows. Catalyzes the complicated ring closure reaction between the two acyclic compounds 1-deoxy-D-xylulose-5-phosphate (DXP) and 3-amino-2-oxopropyl phosphate (1-amino-acetone-3-phosphate or AAP) to form pyridoxine 5'-phosphate (PNP) and inorganic phosphate. The sequence is that of Pyridoxine 5'-phosphate synthase from Xanthomonas oryzae pv. oryzae (strain MAFF 311018).